A 1311-amino-acid polypeptide reads, in one-letter code: Kinase and exchange factor for Rac A (1311 aa).

Residues 18 to 316 (LVFKDIIGKG…STIVTILESI (299 aa)) enclose the Protein kinase domain. Residues 24–32 (IGKGNFGCV) and K45 each bind ATP. D138 serves as the catalytic Proton acceptor. 3 disordered regions span residues 169 to 201 (NGSDSSSSEDESDSECVNGAAGGGGDDVYKNNG), 360 to 426 (QQQS…TTTT), and 446 to 471 (PLSKHQQQQQRNQNSSIIDNNSLIGS). Residues 451–471 (QQQQQRNQNSSIIDNNSLIGS) are compositionally biased toward low complexity. The IQ domain occupies 650-679 (ELNLIIKLQSRIRGWLVRRRYKIFLSNWKL). Positions 691 to 927 (QWIRLFNQLI…RETSNYIQSQ (237 aa)) constitute a DH domain. Composition is skewed to low complexity over residues 994 to 1021 (SKYNNNNNINTNNNNNNLTSSATQTNSN) and 1031 to 1044 (STSNANSDNSGNNN). Disordered stretches follow at residues 994-1044 (SKYN…GNNN), 1114-1145 (NNPNGGGSNNNSIGGGGGGRGGSGNNSNNGSI), and 1208-1311 (GTST…FSKD). The span at 1117 to 1137 (NGGGSNNNSIGGGGGGRGGSG) shows a compositional bias: gly residues. Polar residues predominate over residues 1208 to 1229 (GTSTPERKTSLVNMSPSTTSSL). Low complexity predominate over residues 1230–1245 (NNIDSNYNNNNNNVTN). Residues 1246–1257 (TPIKSVTSSPSI) are compositionally biased toward polar residues. A compositionally biased stretch (low complexity) spans 1263–1276 (NDNNQQPQLPSQPN). A compositionally biased stretch (polar residues) spans 1277-1287 (EEFQFTVPTTP). A compositionally biased stretch (basic residues) spans 1290 to 1303 (KKKKRGSFSSKLKR).

It belongs to the protein kinase superfamily. TKL Ser/Thr protein kinase family. The cofactor is Mg(2+).

It catalyses the reaction L-seryl-[protein] + ATP = O-phospho-L-seryl-[protein] + ADP + H(+). It carries out the reaction L-threonyl-[protein] + ATP = O-phospho-L-threonyl-[protein] + ADP + H(+). The chain is Kinase and exchange factor for Rac A (kxcA) from Dictyostelium discoideum (Social amoeba).